The primary structure comprises 269 residues: 2-keto-4-pentenoate hydratase (269 aa).

This sequence belongs to the hydratase/decarboxylase family. MhpD subfamily. A divalent metal cation serves as cofactor.

The catalysed reaction is (S)-4-hydroxy-2-oxopentanoate = (2Z)-2-hydroxypenta-2,4-dienoate + H2O. It participates in aromatic compound metabolism; 3-phenylpropanoate degradation. In terms of biological role, catalyzes the conversion of 2-hydroxypentadienoic acid (enolic form of 2-oxopent-4-enoate) to 4-hydroxy-2-ketopentanoic acid. The polypeptide is 2-keto-4-pentenoate hydratase (Paraburkholderia xenovorans (strain LB400)).